A 351-amino-acid chain; its full sequence is C-X-C chemokine receptor type 1 (351 aa).

Over 1-46 the chain is Extracellular; it reads MSNATDPQMGDDDYDLNFTGMPPTDEDYSPCRLETQSLNKYVVIVT. 2 N-linked (GlcNAc...) asparagine glycosylation sites follow: asparagine 3 and asparagine 17. Residues 47 to 67 form a helical membrane-spanning segment; sequence YALVFLLSLLGNSLVMLVILY. Residues 68–76 lie on the Cytoplasmic side of the membrane; the sequence is RRVGRSVTD. The chain crosses the membrane as a helical span at residues 77-97; the sequence is VYLLNLAMADLLFALTLPIWA. Over 98–112 the chain is Extracellular; the sequence is ASKVNGWIFGTFLCK. Cysteine 111 and cysteine 188 are joined by a disulfide. A helical membrane pass occupies residues 113–133; it reads VVSLLKEVNFYSGILLLACIS. The Cytoplasmic portion of the chain corresponds to 134 to 154; it reads VDRYLAIVHATRTLIQKRHSV. The chain crosses the membrane as a helical span at residues 155–175; that stretch reads KFVCLSCWGLSVILSLPFFLF. Residues 176–204 are Extracellular-facing; that stretch reads RQAYHPNNSTPVCYEVLGNDTAKWRMVLR. Residues asparagine 182 and asparagine 194 are each glycosylated (N-linked (GlcNAc...) asparagine). The helical transmembrane segment at 205 to 225 threads the bilayer; that stretch reads ILPHTFGFTLPLLIMLFCYGF. The Cytoplasmic segment spans residues 226 to 243; the sequence is TLHTLFKAHIGQKHRAMR. The chain crosses the membrane as a helical span at residues 244 to 264; the sequence is VIFAVVLIFLLCWLPYNLVLL. Residues 265–289 lie on the Extracellular side of the membrane; sequence ADTLMRTHLIKESCERRNDIGRALD. The chain crosses the membrane as a helical span at residues 290-310; it reads ATEILGFLHSCLNPIIYAFIG. At 311-351 the chain is on the cytoplasmic side; the sequence is QNFRHGFLKILATHGLVSKEFLARHHVTSYTSSSVNVSSNL.

It belongs to the G-protein coupled receptor 1 family. As to quaternary structure, interacts with IL8. Interacts with GNAI2.

Its subcellular location is the cell membrane. Functionally, receptor to interleukin-8, which is a powerful neutrophils chemotactic factor. Binding of IL-8 to the receptor causes activation of neutrophils. This response is mediated via a G-protein that activates a phosphatidylinositol-calcium second messenger system. The chain is C-X-C chemokine receptor type 1 (CXCR1) from Macaca mulatta (Rhesus macaque).